The primary structure comprises 161 residues: Ribonuclease H (161 aa).

The 140-residue stretch at 2 to 141 folds into the RNase H type-1 domain; that stretch reads TNNEIIAATD…ADSLARQAAN (140 aa). The Mg(2+) site is built by Asp-11, Glu-46, Asp-69, and Asp-133.

The protein belongs to the RNase H family. As to quaternary structure, monomer. It depends on Mg(2+) as a cofactor.

Its subcellular location is the cytoplasm. It catalyses the reaction Endonucleolytic cleavage to 5'-phosphomonoester.. Its function is as follows. Endonuclease that specifically degrades the RNA of RNA-DNA hybrids. This chain is Ribonuclease H, found in Tropheryma whipplei (strain TW08/27) (Whipple's bacillus).